The sequence spans 339 residues: tRNA N6-adenosine threonylcarbamoyltransferase (339 aa).

The Fe cation site is built by His-114 and His-118. Residues 137 to 141 (VVSGG), Asp-170, Gly-183, Asp-187, and Asn-277 contribute to the substrate site. Asp-305 contributes to the Fe cation binding site.

Belongs to the KAE1 / TsaD family. Fe(2+) is required as a cofactor.

Its subcellular location is the cytoplasm. The enzyme catalyses L-threonylcarbamoyladenylate + adenosine(37) in tRNA = N(6)-L-threonylcarbamoyladenosine(37) in tRNA + AMP + H(+). Functionally, required for the formation of a threonylcarbamoyl group on adenosine at position 37 (t(6)A37) in tRNAs that read codons beginning with adenine. Is involved in the transfer of the threonylcarbamoyl moiety of threonylcarbamoyl-AMP (TC-AMP) to the N6 group of A37, together with TsaE and TsaB. TsaD likely plays a direct catalytic role in this reaction. This is tRNA N6-adenosine threonylcarbamoyltransferase from Clostridium perfringens (strain SM101 / Type A).